A 132-amino-acid chain; its full sequence is CLAVATA3/ESR (CLE)-related protein ESR2 (132 aa).

An N-terminal signal peptide occupies residues 1–26 (MASRMGMVAIVSLFVCALVASTSVNA). Positions 68–132 (NRASKQLDSE…IGPPPFLDRY (65 aa)) are disordered. Hydroxyproline occurs at positions 82 and 85. An O-linked (Ara...) hydroxyproline glycan is attached at P85. Residues 123–132 (IGPPPFLDRY) show a composition bias toward pro residues.

Belongs to the CLV3/ESR signal peptide family. The O-glycosylation (arabinosylation) of the hydroxyproline Pro-85 enhances binding affinity of the ESR2p peptide for its receptor. Seed endosperm.

Its subcellular location is the secreted. It is found in the extracellular space. Extracellular signal peptide that regulates cell fate. This chain is CLAVATA3/ESR (CLE)-related protein ESR2, found in Zea mays (Maize).